Reading from the N-terminus, the 125-residue chain is uncharacterized protein (125 aa).

Its subcellular location is the plastid. The protein resides in the chloroplast. This is an uncharacterized protein from Guillardia theta (Cryptophyte).